We begin with the raw amino-acid sequence, 546 residues long: MFS-type transporter GME11371 (546 aa).

The next 7 helical transmembrane spans lie at 39–59 (LTYLFLALILCMLLAVIDLTI), 77–96 (IGWYASVFFMTVASSQSSWG), 107–127 (MFLLAMGIFELGNVICGAAPT), 137–157 (ITGIGAAGVIAGCFTVAAFAV), 167–187 (GGLAATYGVGSSIGPIIGGVL), 195–215 (WCFYINLPIGGFAAIVLFLFF), and 240–260 (FPGFFCCIAAVTCLLLALLWG). N-linked (GlcNAc...) asparagine glycosylation is present at Asn-267. 7 helical membrane-spanning segments follow: residues 270 to 290 (DVIGTLVGFFLFTALFAVVEW), 307 to 327 (VVLFGTIGGFFAGGAQFVLVY), 349 to 369 (LPYIIGSTITTIVAGTTISAT), 370 to 390 (GYFTPLIVGGGALWTVSAGLI), 402 to 422 (WIGYQALAGLAVGLCYQPPIL), 433 to 453 (VAATSAILLFFQTMGGAFMVS), and 509 to 529 (ISFAIIIALTGASTVAGIFMP).

It belongs to the major facilitator superfamily.

It localises to the cell membrane. It participates in secondary metabolite biosynthesis. Its function is as follows. MFS-type transporter; part of the gene cluster that mediates the biosynthesis of dibenzodioxocinones such as pestalotiollide B, a novel class of inhibitors against cholesterol ester transfer protein (CEPT). essential for dibenzodioxocinones biosynthesis and may be involved in the secretion of the cluster products. In Pestalotiopsis microspora, this protein is MFS-type transporter GME11371.